A 316-amino-acid polypeptide reads, in one-letter code: Petrobactin import system permease protein YclN (316 aa).

8 helical membrane passes run 5–25, 49–69, 94–114, 133–153, 181–201, 224–244, 268–288, and 290–310; these read YLFI…VEDL, LISI…MQQI, LLLF…VFAL, IFIP…ATFI, LLYL…KFTL, LIIV…LPFL, VLLG…IIFP, and EISI…FMLL.

This sequence belongs to the binding-protein-dependent transport system permease family. FecCD subfamily. As to quaternary structure, the complex is composed of two ATP-binding proteins (YclP), two transmembrane proteins (YclN and YclO) and a solute-binding protein (YclQ).

It localises to the cell membrane. Part of the ABC transporter complex YclNOPQ involved in uptake of ferric-petrobactin. Petrobactin is a photoreactive 3,4-catecholate siderophore produced by many members of the B.cereus group, including B.anthracis. Probably responsible for the translocation of the substrate across the membrane. The sequence is that of Petrobactin import system permease protein YclN (yclN) from Bacillus subtilis (strain 168).